The following is a 199-amino-acid chain: Glycerol-3-phosphate acyltransferase (199 aa).

The next 5 helical transmembrane spans lie at 4–24 (FALFYMLFAYLLGSVSSAILI), 56–76 (LAVLIFDMLKGMIPVWAGYYL), 80–100 (QFELGMVALGACLGHIFPIFF), 115–135 (IAPISWAVAGSMFGTWIFVFL), and 154–176 (YVWWFKPEFTFPVALVCCLLIYR).

It belongs to the PlsY family. Probably interacts with PlsX.

The protein resides in the cell inner membrane. It catalyses the reaction an acyl phosphate + sn-glycerol 3-phosphate = a 1-acyl-sn-glycero-3-phosphate + phosphate. It participates in lipid metabolism; phospholipid metabolism. In terms of biological role, catalyzes the transfer of an acyl group from acyl-phosphate (acyl-PO(4)) to glycerol-3-phosphate (G3P) to form lysophosphatidic acid (LPA). This enzyme utilizes acyl-phosphate as fatty acyl donor, but not acyl-CoA or acyl-ACP. In Haemophilus influenzae (strain PittEE), this protein is Glycerol-3-phosphate acyltransferase.